We begin with the raw amino-acid sequence, 30 residues long: Circulin-D (30 aa).

Residues Lys-1–Asp-30 constitute a cross-link (cyclopeptide (Lys-Asp)). 3 cysteine pairs are disulfide-bonded: Cys-4-Cys-20, Cys-8-Cys-22, and Cys-13-Cys-27.

This is a cyclic peptide.

Probably participates in a plant defense mechanism. Inhibits the cytopathic effects of the human immunodeficiency virus. This is Circulin-D from Chassalia parviflora.